We begin with the raw amino-acid sequence, 250 residues long: Golgi SNAP receptor complex member 1 (250 aa).

An N-acetylalanine modification is found at Ala-2. At 2–229 the chain is on the cytoplasmic side; it reads AAGTSNYWED…QRINLRKRRD (228 aa). Positions 10–30 form a coiled coil; sequence EDLRKQARQLENELDLKLVSF. The tract at residues 39 to 59 is disordered; the sequence is HSSARDGRRDRYSSDTTPLLN. The segment covering 41-51 has biased composition (basic and acidic residues); sequence SARDGRRDRYS. The stretch at 70–93 forms a coiled coil; the sequence is MAIEIEQLLARLTGINDKMAEYTS. Ser-141 bears the Phosphoserine mark. Residues 230–250 traverse the membrane as a helical; Anchor for type IV membrane protein segment; the sequence is SLILGGVIGVCTILLLLYAFH.

Belongs to the GOSR1 family. In terms of assembly, component of several multiprotein Golgi SNARE complexes. Identified in a SNARE complex with BET1, STX5 and YKT6, in a SNARE complex with BET1L, STX5 and YKT6, in a SNARE complex with STX5, GOSR2, SEC22B and BET1, and in complex with STX5 and COG3. Interacts with GABARAPL2.

The protein resides in the golgi apparatus membrane. Involved in transport from the ER to the Golgi apparatus as well as in intra-Golgi transport. It belongs to a super-family of proteins called t-SNAREs or soluble NSF (N-ethylmaleimide-sensitive factor) attachment protein receptor. May play a protective role against hydrogen peroxide induced cytotoxicity under glutathione depleted conditions in neuronal cells by regulating the intracellular ROS levels via inhibition of p38 MAPK (MAPK11, MAPK12, MAPK13 and MAPK14). Participates in docking and fusion stage of ER to cis-Golgi transport. Plays an important physiological role in VLDL-transport vesicle-Golgi fusion and thus in VLDL delivery to the hepatic cis-Golgi. The protein is Golgi SNAP receptor complex member 1 (GOSR1) of Bos taurus (Bovine).